Reading from the N-terminus, the 494-residue chain is Lysine--tRNA ligase (494 aa).

Residues Glu-407 and Glu-414 each coordinate Mg(2+).

The protein belongs to the class-II aminoacyl-tRNA synthetase family. As to quaternary structure, homodimer. Mg(2+) is required as a cofactor.

Its subcellular location is the cytoplasm. It carries out the reaction tRNA(Lys) + L-lysine + ATP = L-lysyl-tRNA(Lys) + AMP + diphosphate. This is Lysine--tRNA ligase from Lactococcus lactis subsp. cremoris (strain SK11).